Here is a 94-residue protein sequence, read N- to C-terminus: Co-chaperonin GroES (94 aa).

It belongs to the GroES chaperonin family. In terms of assembly, heptamer of 7 subunits arranged in a ring. Interacts with the chaperonin GroEL.

It localises to the cytoplasm. Together with the chaperonin GroEL, plays an essential role in assisting protein folding. The GroEL-GroES system forms a nano-cage that allows encapsulation of the non-native substrate proteins and provides a physical environment optimized to promote and accelerate protein folding. GroES binds to the apical surface of the GroEL ring, thereby capping the opening of the GroEL channel. The sequence is that of Co-chaperonin GroES from Geobacillus thermodenitrificans (strain NG80-2).